A 461-amino-acid polypeptide reads, in one-letter code: 3-isopropylmalate dehydratase large subunit (461 aa).

Residues C338, C398, and C401 each coordinate [4Fe-4S] cluster.

The protein belongs to the aconitase/IPM isomerase family. LeuC type 1 subfamily. As to quaternary structure, heterodimer of LeuC and LeuD. [4Fe-4S] cluster is required as a cofactor.

The catalysed reaction is (2R,3S)-3-isopropylmalate = (2S)-2-isopropylmalate. Its pathway is amino-acid biosynthesis; L-leucine biosynthesis; L-leucine from 3-methyl-2-oxobutanoate: step 2/4. In terms of biological role, catalyzes the isomerization between 2-isopropylmalate and 3-isopropylmalate, via the formation of 2-isopropylmaleate. The polypeptide is 3-isopropylmalate dehydratase large subunit (Streptococcus mutans serotype c (strain ATCC 700610 / UA159)).